We begin with the raw amino-acid sequence, 137 residues long: Putative pumilio homolog 25 (137 aa).

Pumilio repeat units lie at residues 70 to 105 (EFDS…LPHS) and 108 to 137 (SVLV…TRLA).

It is found in the cytoplasm. Functionally, sequence-specific RNA-binding protein that regulates translation and mRNA stability by binding the 3'-UTR of target mRNAs. The sequence is that of Putative pumilio homolog 25 (APUM25) from Arabidopsis thaliana (Mouse-ear cress).